A 253-amino-acid chain; its full sequence is Pimeloyl-[acyl-carrier protein] methyl ester esterase (253 aa).

Substrate contacts are provided by residues Trp18, 78 to 79 (SL), and 139 to 143 (FLALD). Ser78 functions as the Nucleophile in the catalytic mechanism. Active-site residues include Asp203 and His231. His231 serves as a coordination point for substrate.

Belongs to the AB hydrolase superfamily. Carboxylesterase BioH family. In terms of assembly, monomer.

It localises to the cytoplasm. It carries out the reaction 6-carboxyhexanoyl-[ACP] methyl ester + H2O = 6-carboxyhexanoyl-[ACP] + methanol + H(+). Its pathway is cofactor biosynthesis; biotin biosynthesis. Functionally, the physiological role of BioH is to remove the methyl group introduced by BioC when the pimeloyl moiety is complete. It allows to synthesize pimeloyl-ACP via the fatty acid synthetic pathway through the hydrolysis of the ester bonds of pimeloyl-ACP esters. The chain is Pimeloyl-[acyl-carrier protein] methyl ester esterase from Xanthomonas campestris pv. campestris (strain 8004).